A 394-amino-acid chain; its full sequence is Probable cytosolic iron-sulfur protein assembly protein 1 (394 aa).

7 WD repeats span residues 10-49 (AHND…NFPL), 56-108 (AHKR…EQDS), 144-184 (GHEN…EEFE), 191-230 (DHQH…DDWS), 237-284 (GHGG…TEQI), 313-352 (IHKY…KWEI), and 359-394 (AHGV…IWEP).

The protein belongs to the WD repeat CIA1 family. Interacts with NAR1.

It is found in the cytoplasm. The protein resides in the nucleus. In terms of biological role, essential component of the cytosolic iron-sulfur (Fe/S) protein assembly machinery. Required for the maturation of extramitochondrial Fe/S proteins. This Debaryomyces hansenii (strain ATCC 36239 / CBS 767 / BCRC 21394 / JCM 1990 / NBRC 0083 / IGC 2968) (Yeast) protein is Probable cytosolic iron-sulfur protein assembly protein 1.